Reading from the N-terminus, the 947-residue chain is Pyruvate, phosphate dikinase 1, chloroplastic (947 aa).

The transit peptide at methionine 1 to arginine 62 directs the protein to the chloroplast. The interval aspartate 21–arginine 54 is disordered. Alanine 63 carries the N-acetylalanine; partial modification. Residue threonine 309 is modified to Phosphothreonine. Serine 506 is modified (phosphoserine). Position 527 is a phosphothreonine; by PDRP1 (threonine 527). Serine 528 bears the Phosphoserine; by PDRP1 mark. Catalysis depends on histidine 529, which acts as the Tele-phosphohistidine intermediate. Substrate-binding residues include arginine 635, arginine 692, glutamate 821, glycine 842, threonine 843, asparagine 844, and aspartate 845. A Mg(2+)-binding site is contributed by glutamate 821. Aspartate 845 provides a ligand contact to Mg(2+). Cysteine 907 acts as the Proton donor in catalysis.

This sequence belongs to the PEP-utilizing enzyme family. Homotetramer. Mg(2+) serves as cofactor. In terms of processing, phosphorylation of Thr-527 in the dark inactivates the enzyme, dephosphorylation upon light stimulation reactivates the enzyme. More highly phosphorylated when grown under high rather than low light regimes (70 vs 900 umol photons/m-2/s). the degree of phosphorylation is strictly regulated by light intensity and the light/dark transition has no influence. Phosphorylated in both mesophyll and bundle sheath cells. The phosphorylation at Ser-528 may be important for the phosphorylation at Thr-527 and may also be regulated by light intensity. In terms of tissue distribution, isoform C4PPDKZM1 mainly localized in mesophyll cells and only a low level is found in bundle sheath cells. Isoform CYPPDKZM1 expressed in roots, stems and etiolated leaves.

It is found in the plastid. It localises to the chloroplast. The protein localises to the cytoplasm. The enzyme catalyses pyruvate + phosphate + ATP = phosphoenolpyruvate + AMP + diphosphate + H(+). It participates in photosynthesis; C4 acid pathway. With respect to regulation, activated by light-induced dephosphorylation. Inhibited by dark-induced phosphorylation. Both reactions are catalyzed by PDRP1. Inactivated by cold due to the dissociation of the homotetramer. Independent of circadian regulation. In terms of biological role, formation of phosphoenolpyruvate, which is the primary acceptor of CO(2) in C4 and some Crassulacean acid metabolism plants. This is Pyruvate, phosphate dikinase 1, chloroplastic from Zea mays (Maize).